The chain runs to 147 residues: Lysozyme C (147 aa).

Residues 1 to 18 form the signal peptide; it reads MKALVILGFLFLSVAVQG. The 129-residue stretch at 19–147 folds into the C-type lysozyme domain; it reads KVFERCELAR…VSSYVEGCTL (129 aa). 4 disulfides stabilise this stretch: Cys-24–Cys-145, Cys-48–Cys-133, Cys-83–Cys-99, and Cys-95–Cys-113. Catalysis depends on residues Glu-53 and Asp-71.

Belongs to the glycosyl hydrolase 22 family. In terms of assembly, monomer. As to expression, stomach-specific.

It catalyses the reaction Hydrolysis of (1-&gt;4)-beta-linkages between N-acetylmuramic acid and N-acetyl-D-glucosamine residues in a peptidoglycan and between N-acetyl-D-glucosamine residues in chitodextrins.. Functionally, lysozymes have primarily a bacteriolytic function; those in tissues and body fluids are associated with the monocyte-macrophage system and enhance the activity of immunoagents. This Bos taurus (Bovine) protein is Lysozyme C (LYZ1).